The following is a 124-amino-acid chain: Cholera enterotoxin subunit B (124 aa).

An N-terminal signal peptide occupies residues 1–21; that stretch reads MIKLKFGVFFTVLLSSAYAHG. A disulfide bridge links C30 with C107.

In terms of assembly, the holotoxin (choleragen) consists of a pentameric ring of B subunits whose central pore is occupied by the A subunit. The A subunit contains two chains, A1 and A2, linked by a disulfide bridge.

It localises to the secreted. Its subcellular location is the host cell membrane. Functionally, the B subunit pentameric ring directs the A subunit to its target by binding to the GM1 gangliosides present on the surface of the intestinal epithelial cells. It can bind five GM1 gangliosides. It has no toxic activity by itself. The protein is Cholera enterotoxin subunit B (ctxB) of Vibrio cholerae serotype O1 (strain ATCC 39315 / El Tor Inaba N16961).